A 188-amino-acid chain; its full sequence is Large ribosomal subunit protein eL18 (188 aa).

A Glycyl lysine isopeptide (Lys-Gly) (interchain with G-Cter in SUMO2) cross-link involves residue K119. Phosphoserine is present on S130. Positions H151–N188 are disordered. Residue T158 is modified to Phosphothreonine. Composition is skewed to basic residues over residues S161–G171 and R178–N188. Residue K164 forms a Glycyl lysine isopeptide (Lys-Gly) (interchain with G-Cter in SUMO2) linkage.

This sequence belongs to the eukaryotic ribosomal protein eL18 family. In terms of assembly, component of the large ribosomal subunit.

Its subcellular location is the cytoplasm. It localises to the cytosol. It is found in the rough endoplasmic reticulum. In terms of biological role, component of the large ribosomal subunit. The ribosome is a large ribonucleoprotein complex responsible for the synthesis of proteins in the cell. The chain is Large ribosomal subunit protein eL18 (RPL18) from Canis lupus familiaris (Dog).